The primary structure comprises 888 residues: Probable disease resistance protein At5g63020 (888 aa).

Residues 22-66 (LNRNGDYIHGLEENLTALQRALEQIEQRREDLLRKILSEERRGLQ) adopt a coiled-coil conformation. The 304-residue stretch at 139–442 (AERVDAARVE…GEGFIDRNKG (304 aa)) folds into the NB-ARC domain. 181–188 (GMGGVGKT) contributes to the ATP binding site. 5 LRR repeats span residues 512–533 (VARRVSLMFNNIESIRDAPESP), 534–555 (QLITLLLRKNFLGHISSSFFRL), 558–580 (MLVVLDLSMNRDLRHLPNEISEC), 582–604 (SLQYLSLSRTRIRIWPAGLVELR), and 605–627 (KLLYLNLEYTRMVESICGISGLT).

The protein belongs to the disease resistance NB-LRR family.

Functionally, probable disease resistance protein. The sequence is that of Probable disease resistance protein At5g63020 from Arabidopsis thaliana (Mouse-ear cress).